Reading from the N-terminus, the 437-residue chain is Enolase 2 (437 aa).

Glutamine 162 contributes to the (2R)-2-phosphoglycerate binding site. The active-site Proton donor is the glutamate 204. Mg(2+) contacts are provided by aspartate 251, glutamate 297, and aspartate 324. (2R)-2-phosphoglycerate is bound by residues lysine 349, arginine 378, serine 379, and lysine 400. Catalysis depends on lysine 349, which acts as the Proton acceptor.

The protein belongs to the enolase family. Mg(2+) serves as cofactor.

Its subcellular location is the cytoplasm. It localises to the secreted. The protein resides in the cell surface. It carries out the reaction (2R)-2-phosphoglycerate = phosphoenolpyruvate + H2O. It functions in the pathway carbohydrate degradation; glycolysis; pyruvate from D-glyceraldehyde 3-phosphate: step 4/5. Its function is as follows. Catalyzes the reversible conversion of 2-phosphoglycerate (2-PG) into phosphoenolpyruvate (PEP). It is essential for the degradation of carbohydrates via glycolysis. The chain is Enolase 2 from Chlorobaculum tepidum (strain ATCC 49652 / DSM 12025 / NBRC 103806 / TLS) (Chlorobium tepidum).